Reading from the N-terminus, the 263-residue chain is MQPRVTTTTLFKMKQEGKRITALTAYDHPFATLVDAAGIDIILVGDSLGMVVQGKQTTLPVTMDEILYHTAMVTRACNRAMVVGDMPFMSYQSSINQAVDNAGRFLKEADASAVKLEGGADVCPVIQAIAKAGIPVQAHIGLTPQSVHQMGGFRVQRDEERLVSDALKVQDAGAFSVVLEGIPSDIAGIITKKLDIPTIGIGAGPGCDGQILVLHDMLGLHDRHLPKFVRQFADLRTQAARGLEQYRDAVRNGSFPAEEHGYK.

Positions 46 and 85 each coordinate Mg(2+). 3-methyl-2-oxobutanoate is bound by residues aspartate 46–serine 47, aspartate 85, and lysine 115. Residue glutamate 117 coordinates Mg(2+). The active-site Proton acceptor is glutamate 180.

The protein belongs to the PanB family. In terms of assembly, homodecamer; pentamer of dimers. Mg(2+) serves as cofactor.

The protein resides in the cytoplasm. It catalyses the reaction 3-methyl-2-oxobutanoate + (6R)-5,10-methylene-5,6,7,8-tetrahydrofolate + H2O = 2-dehydropantoate + (6S)-5,6,7,8-tetrahydrofolate. It functions in the pathway cofactor biosynthesis; (R)-pantothenate biosynthesis; (R)-pantoate from 3-methyl-2-oxobutanoate: step 1/2. Catalyzes the reversible reaction in which hydroxymethyl group from 5,10-methylenetetrahydrofolate is transferred onto alpha-ketoisovalerate to form ketopantoate. This chain is 3-methyl-2-oxobutanoate hydroxymethyltransferase, found in Desulforapulum autotrophicum (strain ATCC 43914 / DSM 3382 / VKM B-1955 / HRM2) (Desulfobacterium autotrophicum).